Reading from the N-terminus, the 237-residue chain is uncharacterized protein (237 aa).

A Response regulatory domain is found at R3–L116. D52 bears the 4-aspartylphosphate mark. Residues S131 to V229 constitute a DNA-binding region (ompR/PhoB-type).

Phosphorylated by YvcQ.

Its subcellular location is the cytoplasm. Functionally, member of the two-component regulatory system YvcQ/YvcP. This is an uncharacterized protein from Bacillus subtilis (strain 168).